Consider the following 358-residue polypeptide: DNA integrity scanning protein DisA (358 aa).

The DAC domain maps to 6 to 144 (RPTLREAVAR…RGERHVLTDS (139 aa)). ATP contacts are provided by residues glycine 73, leucine 91, and 104 to 108 (TRHRS).

The protein belongs to the DisA family. As to quaternary structure, homooctamer. Requires Mg(2+) as cofactor.

It catalyses the reaction 2 ATP = 3',3'-c-di-AMP + 2 diphosphate. Functionally, participates in a DNA-damage check-point. DisA forms globular foci that rapidly scan along the chromosomes searching for lesions. In terms of biological role, also has diadenylate cyclase activity, catalyzing the condensation of 2 ATP molecules into cyclic di-AMP (c-di-AMP). c-di-AMP likely acts as a signaling molecule that may couple DNA integrity with a cellular process. In Mycobacterium tuberculosis (strain ATCC 25177 / H37Ra), this protein is DNA integrity scanning protein DisA.